A 488-amino-acid chain; its full sequence is MDSPVSKTDASKEKFVASRPSTADSKTMRGCGLANLAWVGVDKVELRQRLMMPEYLRLAMRDCIKRKDSSAIPDHLLLPGGAVADMAPHAPMVVFINPNSGGRHGPVLKERLQQLMSEEQVFDLTEVKPHEFVRYGLGCLEKVAAEGDECAKECRARLRIMVAGGDGTVGWVLGCLGELNKDGKSQIPPVGVIPLGTGNDLSRSFGWGGSFPFAWRSAVKRTLHRASMGPVARLDSWKILVSMPSGEVVDPPYSLKPAEENELDQGLDAGIDAPPLAKAYEGVFYNYLSIGMDAQVAYGFHHLRNTKPYLAQGPISNKIIYSSFGCSQGWFCTPCVNDPGLRGLRNIMKIHIKKVNCSQWEEIAVPKNVRSIVALNLHSYGSGSHPWGNLKPDYLEKRGFVEAHCDDGLIEIFGFKQGWHASFVMAELISAKHIAQAAAVRFELRGGDWRDAFLQMDGEPWKQPMSTEYSTFVEIKKVPYQSLMINNE.

Residues 1–24 (MDSPVSKTDASKEKFVASRPSTAD) form a disordered region. Residues 87–245 (APHAPMVVFI…SWKILVSMPS (159 aa)) form the DAGKc domain.

The protein belongs to the eukaryotic diacylglycerol kinase family. In terms of assembly, monomer.

The enzyme catalyses a 1,2-diacyl-sn-glycerol + ATP = a 1,2-diacyl-sn-glycero-3-phosphate + ADP + H(+). Its function is as follows. Phosphorylates the second messenger diacylglycerol (DAG) to generate phosphatidic acid (PA), another important signaling molecule. PA is required for plant development and responses to abiotic stress and pathogen attack. May be involved in the accumulation of PA during cold stress. This is Diacylglycerol kinase 3 (DGK3) from Arabidopsis thaliana (Mouse-ear cress).